Consider the following 509-residue polypeptide: Cytochrome P450 monooxygenase fumoA (509 aa).

Residues 5–27 (LANLNFPYLILSACLSAILLSRF) traverse the membrane as a helical segment. Residues Asn-317, Asn-369, and Asn-378 are each glycosylated (N-linked (GlcNAc...) asparagine). Cys-456 provides a ligand contact to heme. Asn-464 carries N-linked (GlcNAc...) asparagine glycosylation.

This sequence belongs to the cytochrome P450 family. Requires heme as cofactor.

It localises to the membrane. Its pathway is secondary metabolite biosynthesis. Cytochrome P450 monooxygenase; part of the gene cluster that mediates the biosynthesis of fumosorinone, a 2-pyridone alkaloid that acts as an inhibitor of protein tyrosine phosphatase 1B which is implicated asa negative regulator of insulin receptor signaling and a potential drug target for the treatment of type II diabetes and other associated metabolic syndromes. The polyketide-amino acid backbone of fumosorinone is first assembled by the PKS-NRPS hybrid fumoS. The PKS modules condense one acetyl-CoA starter unit with 7 malonyl-CoA units, programmed C-methylations occurring after the first 3 and the sixth extensions, and cycles of full reduction occurring after the first 2 extensions. Because fumoS lacks a designated enoyl reductase (ER) domain, the required activity is provided the enoyl reductase fumoC. Upon formation of the polyketide backbone on the thiotemplate, the polyketide is transferred to the NRPS module and linked to tyrosine to produce the acyltetramic acid intermediate called prefumosorinone A. The cytochrome P450 monooxygenase fumoA then probably catalyzes an unprecedented oxidative ring expansion of prefumosorinone A to form prefumosorinone B which contains the 2-pyridone core of fumosorinone. The cytochrome P450 monooxygenase fumoB might hydroxylate the nitrogen of prefumosorinone B, but not the acyltetramic acid prefumosorinone A, to form fumosorinone. The chain is Cytochrome P450 monooxygenase fumoA from Cordyceps fumosorosea (strain ARSEF 2679) (Isaria fumosorosea).